A 312-amino-acid polypeptide reads, in one-letter code: Light-independent protochlorophyllide reductase iron-sulfur ATP-binding protein (312 aa).

ATP is bound by residues 55–60 (GIGKST) and Lys-84. Mg(2+) is bound at residue Ser-59. The [4Fe-4S] cluster site is built by Cys-140 and Cys-174. ATP is bound by residues 225–226 (NR) and 249–251 (PDL).

Belongs to the NifH/BchL/ChlL family. Homodimer. Protochlorophyllide reductase is composed of three subunits; BchL, BchN and BchB. [4Fe-4S] cluster is required as a cofactor.

The catalysed reaction is chlorophyllide a + oxidized 2[4Fe-4S]-[ferredoxin] + 2 ADP + 2 phosphate = protochlorophyllide a + reduced 2[4Fe-4S]-[ferredoxin] + 2 ATP + 2 H2O. It functions in the pathway porphyrin-containing compound metabolism; bacteriochlorophyll biosynthesis (light-independent). Component of the dark-operative protochlorophyllide reductase (DPOR) that uses Mg-ATP and reduced ferredoxin to reduce ring D of protochlorophyllide (Pchlide) to form chlorophyllide a (Chlide). This reaction is light-independent. The L component serves as a unique electron donor to the NB-component of the complex, and binds Mg-ATP. The sequence is that of Light-independent protochlorophyllide reductase iron-sulfur ATP-binding protein from Rhodopseudomonas palustris (strain ATCC BAA-98 / CGA009).